The sequence spans 304 residues: N-acetyl-D-glucosamine kinase (304 aa).

Residues 4–11 (GFDMGGTK) and 133–140 (GLGGGLVI) contribute to the ATP site. Zn(2+) is bound by residues His-157, Cys-177, Cys-179, and Cys-184.

Belongs to the ROK (NagC/XylR) family. NagK subfamily.

It carries out the reaction N-acetyl-D-glucosamine + ATP = N-acetyl-D-glucosamine 6-phosphate + ADP + H(+). The protein operates within cell wall biogenesis; peptidoglycan recycling. In terms of biological role, catalyzes the phosphorylation of N-acetyl-D-glucosamine (GlcNAc) derived from cell-wall degradation, yielding GlcNAc-6-P. The sequence is that of N-acetyl-D-glucosamine kinase from Pectobacterium carotovorum subsp. carotovorum (strain PC1).